The following is a 299-amino-acid chain: 11-beta-hydroxysteroid dehydrogenase-like 4A (299 aa).

Residues isoleucine 10–phenylalanine 30 traverse the membrane as a helical; Signal-anchor for type II membrane protein segment. NADP(+) is bound by residues glycine 54 to arginine 80 and aspartate 105. Residue serine 184 coordinates substrate. Residue tyrosine 197 is the Proton acceptor of the active site. Residues tyrosine 197–lysine 201 and lysine 201 each bind NADP(+).

This sequence belongs to the short-chain dehydrogenases/reductases (SDR) family.

The protein resides in the membrane. The protein is 11-beta-hydroxysteroid dehydrogenase-like 4A (HSD4) of Arabidopsis thaliana (Mouse-ear cress).